The sequence spans 180 residues: O-acetyl-ADP-ribose deacetylase (180 aa).

One can recognise a Macro domain in the interval 1–175 (MKPQIDVIHG…LYQRLLTQRG (175 aa)). Residues 11-12 (DI), Asn-25, 33-35 (GVD), and 122-126 (STGVY) each bind substrate. The active-site Proton acceptor is Asp-35.

Belongs to the MacroD-type family. YmdB subfamily. As to quaternary structure, homodimer. Interacts with RNase III.

It carries out the reaction 3''-O-acetyl-ADP-D-ribose + H2O = ADP-D-ribose + acetate + H(+). It catalyses the reaction 2''-O-acetyl-ADP-D-ribose + H2O = ADP-D-ribose + acetate + H(+). Functionally, deacetylates O-acetyl-ADP ribose to yield ADP-ribose and free acetate. Down-regulates ribonuclease 3 (RNase III) activity. Acts by interacting directly with the region of the ribonuclease that is required for dimerization/activation. The sequence is that of O-acetyl-ADP-ribose deacetylase from Enterobacter cloacae subsp. cloacae (strain ATCC 13047 / DSM 30054 / NBRC 13535 / NCTC 10005 / WDCM 00083 / NCDC 279-56).